A 612-amino-acid chain; its full sequence is Chloride intracellular channel protein 6 (612 aa).

A disordered region spans residues 1–373; it reads MAEATEPKEV…NGPASEEGDL (373 aa). Over residues 34 to 51 the composition is skewed to basic and acidic residues; sequence LEGREASEGAAEAPRDLG. The residue at position 40 (serine 40) is a Phosphoserine. Low complexity predominate over residues 84–96; that stretch reads PGTETPGTSGAPG. Residues 120–129 show a composition bias toward polar residues; that stretch reads QQVQGTSSGL. A compositionally biased stretch (basic and acidic residues) spans 140-153; that stretch reads EDARREPEDPKASE. Positions 208–223 are enriched in low complexity; the sequence is SSPQPQDEAIEIAAAE. 2 stretches are compositionally biased toward basic and acidic residues: residues 240 to 264 and 275 to 303; these read AKGE…RVDS and EEAR…RPES. Serine 264, serine 303, and serine 321 each carry phosphoserine. Composition is skewed to basic and acidic residues over residues 325–335 and 354–364; these read EEAKSTGHEES and ELGRVNGRREN. A Phosphoserine modification is found at serine 368. A G-site motif is present at residues 395–398; sequence CPFS. Residues 397–417 form a helical membrane-spanning segment; that stretch reads FSQRLFMILWLKGVIFNVTTV. In terms of domain architecture, GST C-terminal spans 441-612; it reads DGEVKTDVNK…AYSDAAKRMK (172 aa).

It belongs to the chloride channel CLIC family. As to quaternary structure, monomer (soluble state). Interacts with dopamine receptors DRD2, DRD3 and DRD4. Phosphorylated. In terms of tissue distribution, predominantly expressed in brain, pituitary and stomach. In adult brain, it is restricted to the choroid plexus, the striatal proliferative subventricular zone and the cerebellum where it colocalizes with the D(3)R in the Purkinje cells of the lobules IX and X.

Its subcellular location is the cytoplasm. It localises to the cell membrane. The catalysed reaction is chloride(in) = chloride(out). Channel activity is redox- and pH-regulated. Inhibited by IAA-94. In terms of biological role, in the soluble state, catalyzes glutaredoxin-like thiol disulfide exchange reactions with reduced glutathione as electron donor. Can insert into membranes and form voltage-dependent chloride-selective channels. The channel opens upon membrane depolarization at positive voltages and closes at negative membrane voltages. May play a critical role in water-secreting cells, possibly through the regulation of chloride ion transport. In Rattus norvegicus (Rat), this protein is Chloride intracellular channel protein 6 (Clic6).